The following is an 870-amino-acid chain: MSRSVISLERSTEAKKAAACPLEVIVSEAAKVIAPLWPISAFIARHPWMGMEDKSFVDAADRLQEAYGIDLYPPMAVFHAALSKGEIDVSFIERRLQRWLDDEPLPAPRHEAERLCRALLWNDAVPEEALQMPKLIELAAAMPLRSVSIRTRSVRLGLEKRLDQQMIKWCKLFYDRGEAVWALPHREHGFYGSWRRLAPLDPSLSKEERKRLFDWPHHPEEALQRALEQLGVQDEEAVAYLEAHLLALPGWAGMMVWQSRRAGDEIGGLINYLAVRLSLEWVFTAPHLPLKEEENEDDRAVGPLLAAWIHWGGMTLDDWRRLPLEDRQARLVFADRFWRIGRRHLWLEAWEDTYEAKLKEAVLTRQPEEPKEQAAAQLLFCIDVRSEPFRRHVEAVGPFETYGCAGFFGLPIQTRVLDSDDAHPSCPAIVAPRHEINETASPETAAPYRRRRDLFRFVGRTFKKIKRHLLAGLLLPEMSGPWLGLHTIARSAAPAWAGQAIHQAEMSAQQKPKTTLSLDCQGHDETTGLPIGLTKEEQVQYVKQLLVNIGLTSSFAPLVVVCGHESETTNNPYASALDCGACGGAAGAFNARVFAALANLPHVRDGLAKEGIVIPDETVFVAAEHITTVDELRWVEVPPLSEAAEAAFRQLKQALAGVSRQANAERMAKLPHVGAMPRDPVAEARRRAVDWSEIRPEWGLAGNAAFLIGRRALTKGVHLDGRVFLHSYDWREDPTGEALAGIIAGPATVGQWINLQYYASTVAPNYYGSGDKTTQTVTGGIGVMQGNGSDLLAGLPWQSVAASDREWFHSPLRLLVIIEAPFSYIERLLDENSEFRRKVQNGWLRLASIDPDSGAWVNWEAGRLASVQQR.

4 residues coordinate Zn(2+): Cys381, Asp383, His564, and Cys579.

This sequence belongs to the inorganic carbon transporter (TC 9.A.2) DabA family. As to quaternary structure, forms a complex with DabB. It depends on Zn(2+) as a cofactor.

Its subcellular location is the cell membrane. Functionally, part of an energy-coupled inorganic carbon pump. The sequence is that of Probable inorganic carbon transporter subunit DabA from Geobacillus kaustophilus (strain HTA426).